The sequence spans 229 residues: Peptidyl-tRNA hydrolase (229 aa).

Tyrosine 17 is a binding site for tRNA. Histidine 22 acts as the Proton acceptor in catalysis. The tRNA site is built by phenylalanine 74, asparagine 76, and asparagine 122. The disordered stretch occupies residues 194 to 229 (AGKTTRPRKPVRQTANAEASNNSPEASATPQNKDNT). Residues 207–223 (TANAEASNNSPEASATP) are compositionally biased toward low complexity.

The protein belongs to the PTH family. In terms of assembly, monomer.

It is found in the cytoplasm. It carries out the reaction an N-acyl-L-alpha-aminoacyl-tRNA + H2O = an N-acyl-L-amino acid + a tRNA + H(+). Its function is as follows. Hydrolyzes ribosome-free peptidyl-tRNAs (with 1 or more amino acids incorporated), which drop off the ribosome during protein synthesis, or as a result of ribosome stalling. Catalyzes the release of premature peptidyl moieties from peptidyl-tRNA molecules trapped in stalled 50S ribosomal subunits, and thus maintains levels of free tRNAs and 50S ribosomes. This is Peptidyl-tRNA hydrolase from Desulfovibrio desulfuricans (strain ATCC 27774 / DSM 6949 / MB).